Consider the following 355-residue polypeptide: Vacuolar protein sorting-associated protein 37C (355 aa).

Residue serine 29 is modified to Phosphoserine. A VPS37 C-terminal domain is found at valine 78 to alanine 167. A disordered region spans residues lysine 159 to tyrosine 355. Composition is skewed to pro residues over residues alanine 170–threonine 186 and proline 194–proline 214. Low complexity predominate over residues alanine 291–alanine 304. The segment covering proline 321–tyrosine 355 has biased composition (pro residues).

The protein belongs to the VPS37 family. In terms of assembly, component of the ESCRT-I complex (endosomal sorting complex required for transport I) which consists of TSG101, VPS28, a VPS37 protein (VPS37A to -D) and MVB12A or MVB12B in a 1:1:1:1 stoichiometry. Interacts with TSG101, VPS28, MVB12A and MVB12B. Component of the ESCRT-I complex (endosomal sorting complex required for transport I) which consists of TSG101, VPS28, a VPS37 protein (VPS37A to -D) and UBAP1 in a 1:1:1:1 stoichiometry. Interacts with HGS and STAM2. Interacts with CEP55. Phosphorylated by TBK1.

Its subcellular location is the late endosome membrane. In terms of biological role, component of the ESCRT-I complex, a regulator of vesicular trafficking process. Required for the sorting of endocytic ubiquitinated cargos into multivesicular bodies. May be involved in cell growth and differentiation. The polypeptide is Vacuolar protein sorting-associated protein 37C (VPS37C) (Homo sapiens (Human)).